We begin with the raw amino-acid sequence, 256 residues long: Small ribosomal subunit protein eS1 (256 aa).

An N-acetylalanine; partial modification is found at Ala-2.

The protein belongs to the eukaryotic ribosomal protein eS1 family. As to quaternary structure, component of the small ribosomal subunit. Mature ribosomes consist of a small (40S) and a large (60S) subunit. The 40S subunit contains about 33 different proteins and 1 molecule of RNA (18S). The 60S subunit contains about 49 different proteins and 3 molecules of RNA (25S, 5.8S and 5S).

The protein resides in the cytoplasm. In Laccaria bicolor (strain S238N-H82 / ATCC MYA-4686) (Bicoloured deceiver), this protein is Small ribosomal subunit protein eS1.